The chain runs to 288 residues: Pyridoxal kinase PdxY (288 aa).

Substrate contacts are provided by residues Ser-9 and 44–45 (TQ). Residues Asp-111, Glu-148, and Lys-181 each contribute to the ATP site. Residue Asp-224 coordinates substrate.

Belongs to the pyridoxine kinase family. PdxY subfamily. Homodimer. It depends on Mg(2+) as a cofactor.

It carries out the reaction pyridoxal + ATP = pyridoxal 5'-phosphate + ADP + H(+). The protein operates within cofactor metabolism; pyridoxal 5'-phosphate salvage; pyridoxal 5'-phosphate from pyridoxal: step 1/1. Its function is as follows. Pyridoxal kinase involved in the salvage pathway of pyridoxal 5'-phosphate (PLP). Catalyzes the phosphorylation of pyridoxal to PLP. The sequence is that of Pyridoxal kinase PdxY from Haemophilus influenzae (strain ATCC 51907 / DSM 11121 / KW20 / Rd).